The following is a 648-amino-acid chain: ABC transporter G family member 14 (648 aa).

An ABC transporter domain is found at 53–304 (LKFEEVVYKV…FSSLGFSTSL (252 aa)). 99–106 (GPSGSGKT) contacts ATP. N-linked (GlcNAc...) asparagine glycosylation occurs at asparagine 346. An ABC transmembrane type-2 domain is found at 384–590 (YQFTVLLQRG…CYKLLLGIQY (207 aa)). 7 helical membrane-spanning segments follow: residues 405–425 (LRIF…WHTP), 435–455 (LLFF…VFTF), 485–505 (LPLE…MGGL), 512–532 (FILS…LGLA), 543–562 (ATTL…GYYV), 569–591 (IVWL…IQYT), and 620–640 (LWID…MAYM).

Belongs to the ABC transporter superfamily. ABCG family. Eye pigment precursor importer (TC 3.A.1.204) subfamily. As to quaternary structure, forms heterodimers with ABCG11. As to expression, accumulates primarily in the pericycle and stelar cells of roots. Expressed in leaves, stems, flowers and siliques, and, at low levels, in roots. Accumulates in the phloem.

The protein resides in the cell membrane. Its function is as follows. Positive regulator of plant growth which acts as an efflux pump involved in the major root-to-shoot (acropetal) long-distance cytokinin (CK) transport via the xylem sap. Together with ABCG9 and ABCG11, required for vascular development by regulating lipid/sterol homeostasis. Involved in CK-dependent responses to oxidative stress such as hydrogen peroxide H(2)O(2). (Microbial infection) Required for SNC1-mediated defense response against the virulent pathogen Pseudomonas syringae pv. tomato DC3000 by promoting the accumulation of trans-zeatin (tZ)-type cytokinins (CK) in the shoot. In Arabidopsis thaliana (Mouse-ear cress), this protein is ABC transporter G family member 14.